Consider the following 386-residue polypeptide: DNA replication and repair protein RecF (386 aa).

ATP is bound at residue 30–37; sequence GSNGFGKT.

Belongs to the RecF family.

It localises to the cytoplasm. Functionally, the RecF protein is involved in DNA metabolism; it is required for DNA replication and normal SOS inducibility. RecF binds preferentially to single-stranded, linear DNA. It also seems to bind ATP. The sequence is that of DNA replication and repair protein RecF from Mycolicibacterium vanbaalenii (strain DSM 7251 / JCM 13017 / BCRC 16820 / KCTC 9966 / NRRL B-24157 / PYR-1) (Mycobacterium vanbaalenii).